A 305-amino-acid polypeptide reads, in one-letter code: tRNA dimethylallyltransferase (305 aa).

9–16 (GPTAVGKT) provides a ligand contact to ATP. Residue 11 to 16 (TAVGKT) participates in substrate binding. Residues 34–37 (DSRQ) form an interaction with substrate tRNA region.

The protein belongs to the IPP transferase family. As to quaternary structure, monomer. Mg(2+) is required as a cofactor.

The catalysed reaction is adenosine(37) in tRNA + dimethylallyl diphosphate = N(6)-dimethylallyladenosine(37) in tRNA + diphosphate. In terms of biological role, catalyzes the transfer of a dimethylallyl group onto the adenine at position 37 in tRNAs that read codons beginning with uridine, leading to the formation of N6-(dimethylallyl)adenosine (i(6)A). In Roseiflexus sp. (strain RS-1), this protein is tRNA dimethylallyltransferase.